The sequence spans 309 residues: 4-hydroxy-3-methylbut-2-enyl diphosphate reductase (309 aa).

Cysteine 13 is a [4Fe-4S] cluster binding site. Residues histidine 42 and histidine 75 each contribute to the (2E)-4-hydroxy-3-methylbut-2-enyl diphosphate site. Residues histidine 42 and histidine 75 each contribute to the dimethylallyl diphosphate site. 2 residues coordinate isopentenyl diphosphate: histidine 42 and histidine 75. Residue cysteine 97 participates in [4Fe-4S] cluster binding. Histidine 125 provides a ligand contact to (2E)-4-hydroxy-3-methylbut-2-enyl diphosphate. Histidine 125 provides a ligand contact to dimethylallyl diphosphate. Histidine 125 is a binding site for isopentenyl diphosphate. Glutamate 127 serves as the catalytic Proton donor. (2E)-4-hydroxy-3-methylbut-2-enyl diphosphate is bound at residue threonine 165. Cysteine 195 contributes to the [4Fe-4S] cluster binding site. (2E)-4-hydroxy-3-methylbut-2-enyl diphosphate contacts are provided by serine 223, serine 224, asparagine 225, and serine 267. Dimethylallyl diphosphate is bound by residues serine 223, serine 224, asparagine 225, and serine 267. Positions 223, 224, 225, and 267 each coordinate isopentenyl diphosphate.

This sequence belongs to the IspH family. Requires [4Fe-4S] cluster as cofactor.

It carries out the reaction isopentenyl diphosphate + 2 oxidized [2Fe-2S]-[ferredoxin] + H2O = (2E)-4-hydroxy-3-methylbut-2-enyl diphosphate + 2 reduced [2Fe-2S]-[ferredoxin] + 2 H(+). It catalyses the reaction dimethylallyl diphosphate + 2 oxidized [2Fe-2S]-[ferredoxin] + H2O = (2E)-4-hydroxy-3-methylbut-2-enyl diphosphate + 2 reduced [2Fe-2S]-[ferredoxin] + 2 H(+). The protein operates within isoprenoid biosynthesis; dimethylallyl diphosphate biosynthesis; dimethylallyl diphosphate from (2E)-4-hydroxy-3-methylbutenyl diphosphate: step 1/1. It participates in isoprenoid biosynthesis; isopentenyl diphosphate biosynthesis via DXP pathway; isopentenyl diphosphate from 1-deoxy-D-xylulose 5-phosphate: step 6/6. In terms of biological role, catalyzes the conversion of 1-hydroxy-2-methyl-2-(E)-butenyl 4-diphosphate (HMBPP) into a mixture of isopentenyl diphosphate (IPP) and dimethylallyl diphosphate (DMAPP). Acts in the terminal step of the DOXP/MEP pathway for isoprenoid precursor biosynthesis. The sequence is that of 4-hydroxy-3-methylbut-2-enyl diphosphate reductase from Chlamydia abortus (strain DSM 27085 / S26/3) (Chlamydophila abortus).